We begin with the raw amino-acid sequence, 245 residues long: Orotidine 5'-phosphate decarboxylase (245 aa).

Substrate is bound by residues Asp-22, Lys-44, 71 to 80 (DLKFHDIPNT), Thr-131, Arg-192, Gln-201, Gly-221, and Arg-222. Lys-73 (proton donor) is an active-site residue.

This sequence belongs to the OMP decarboxylase family. Type 1 subfamily. Homodimer.

It catalyses the reaction orotidine 5'-phosphate + H(+) = UMP + CO2. Its pathway is pyrimidine metabolism; UMP biosynthesis via de novo pathway; UMP from orotate: step 2/2. In terms of biological role, catalyzes the decarboxylation of orotidine 5'-monophosphate (OMP) to uridine 5'-monophosphate (UMP). This chain is Orotidine 5'-phosphate decarboxylase, found in Salmonella choleraesuis (strain SC-B67).